The sequence spans 393 residues: Lipid-A-disaccharide synthase (393 aa).

It belongs to the LpxB family.

It carries out the reaction a lipid X + a UDP-2-N,3-O-bis[(3R)-3-hydroxyacyl]-alpha-D-glucosamine = a lipid A disaccharide + UDP + H(+). It functions in the pathway bacterial outer membrane biogenesis; LPS lipid A biosynthesis. Its function is as follows. Condensation of UDP-2,3-diacylglucosamine and 2,3-diacylglucosamine-1-phosphate to form lipid A disaccharide, a precursor of lipid A, a phosphorylated glycolipid that anchors the lipopolysaccharide to the outer membrane of the cell. This Rhodopseudomonas palustris (strain HaA2) protein is Lipid-A-disaccharide synthase.